The sequence spans 273 residues: Putative pyruvate, phosphate dikinase regulatory protein (273 aa).

153 to 160 contacts ADP; sequence GVSRTSKS.

The protein belongs to the pyruvate, phosphate/water dikinase regulatory protein family. PDRP subfamily.

It catalyses the reaction N(tele)-phospho-L-histidyl/L-threonyl-[pyruvate, phosphate dikinase] + ADP = N(tele)-phospho-L-histidyl/O-phospho-L-threonyl-[pyruvate, phosphate dikinase] + AMP + H(+). The enzyme catalyses N(tele)-phospho-L-histidyl/O-phospho-L-threonyl-[pyruvate, phosphate dikinase] + phosphate + H(+) = N(tele)-phospho-L-histidyl/L-threonyl-[pyruvate, phosphate dikinase] + diphosphate. Its function is as follows. Bifunctional serine/threonine kinase and phosphorylase involved in the regulation of the pyruvate, phosphate dikinase (PPDK) by catalyzing its phosphorylation/dephosphorylation. The protein is Putative pyruvate, phosphate dikinase regulatory protein of Ehrlichia chaffeensis (strain ATCC CRL-10679 / Arkansas).